The chain runs to 495 residues: UDP-glycosyltransferase 71B7 (495 aa).

UDP-alpha-D-glucose is bound by residues serine 284, 351–353, 368–376, and 390–393; these read APQ, HCGWNSTLE, and YAEQ.

It belongs to the UDP-glycosyltransferase family.

This is UDP-glycosyltransferase 71B7 (UGT71B7) from Arabidopsis thaliana (Mouse-ear cress).